Here is a 150-residue protein sequence, read N- to C-terminus: Classical arabinogalactan protein 6 (150 aa).

Residues 1–20 form the signal peptide; sequence MARQFVVLVLLTLTIATAFA. Composition is skewed to low complexity over residues 19 to 75 and 85 to 98; these read FAAD…SPAA and SASS…APTV. The tract at residues 19-131 is disordered; the sequence is FAADAPSASP…ESPKSGAVTT (113 aa). A lipid anchor (GPI-anchor amidated serine) is attached at Ser-126. Residues 127–150 constitute a propeptide, removed in mature form; that stretch reads GAVTTAKFSVVGTVATVGFFFFSF.

Belongs to the classical AGP family. Post-translationally, O-glycosylated on the hydroxyproline residues. In terms of tissue distribution, expressed in the anthers.

The protein resides in the cell membrane. Its function is as follows. Proteoglycan that seems to be implicated in diverse developmental roles such as differentiation, cell-cell recognition, embryogenesis and programmed cell death. Plays an important role during the formation of the nexine layer of the pollen wall. The chain is Classical arabinogalactan protein 6 (AGP6) from Arabidopsis thaliana (Mouse-ear cress).